The following is a 145-amino-acid chain: uncharacterized protein (145 aa).

Transmembrane regions (helical) follow at residues 20–40 (LIGP…GMFF) and 116–136 (MIML…VLSA).

The protein resides in the membrane. This is an uncharacterized protein from Saccharomyces cerevisiae (strain ATCC 204508 / S288c) (Baker's yeast).